A 24-amino-acid polypeptide reads, in one-letter code: SM-11044-binding protein (24 aa).

May mediate relaxation of depolarized colon tonus. It binds iodocyanopindolol and SM-11044. This is SM-11044-binding protein from Rattus norvegicus (Rat).